A 107-amino-acid chain; its full sequence is Flagellar hook-basal body complex protein FliE (107 aa).

It belongs to the FliE family.

It localises to the bacterial flagellum basal body. The protein is Flagellar hook-basal body complex protein FliE of Mesorhizobium japonicum (strain LMG 29417 / CECT 9101 / MAFF 303099) (Mesorhizobium loti (strain MAFF 303099)).